Reading from the N-terminus, the 126-residue chain is Large ribosomal subunit protein uL22 (126 aa).

This sequence belongs to the universal ribosomal protein uL22 family. Part of the 50S ribosomal subunit.

In terms of biological role, this protein binds specifically to 23S rRNA; its binding is stimulated by other ribosomal proteins, e.g. L4, L17, and L20. It is important during the early stages of 50S assembly. It makes multiple contacts with different domains of the 23S rRNA in the assembled 50S subunit and ribosome. The globular domain of the protein is located near the polypeptide exit tunnel on the outside of the subunit, while an extended beta-hairpin is found that lines the wall of the exit tunnel in the center of the 70S ribosome. This chain is Large ribosomal subunit protein uL22, found in Prochlorococcus marinus (strain NATL2A).